Here is a 1034-residue protein sequence, read N- to C-terminus: Tubulin glycylase 3D (1034 aa).

Polar residues-rich tracts occupy residues methionine 1–asparagine 13 and glutamine 131–phenylalanine 146. Disordered regions lie at residues methionine 1–aspartate 21, glutamine 131–tyrosine 166, and leucine 189–glutamine 208. A compositionally biased stretch (basic residues) spans arginine 151–arginine 161. Positions leucine 189–leucine 199 are enriched in low complexity. Residues aspartate 571–lysine 930 form the TTL domain. Residues glutamine 741–isoleucine 744, lysine 754, and aspartate 756 contribute to the ATP site. A disordered region spans residues histidine 1002–leucine 1034.

The protein localises to the cytoplasm. Probable glycylase which modifies tubulin, generating side chains of glycine on the gamma-carboxyl groups of specific glutamate residues within the C-terminal tail of tubulin. The protein is Tubulin glycylase 3D (TTLL3D) of Tetrahymena thermophila (strain SB210).